The chain runs to 200 residues: Lipid A acyltransferase PagP (200 aa).

Positions M1–A24 are cleaved as a signal peptide. Active-site residues include H72, D115, and S116.

The protein belongs to the lipid A palmitoyltransferase family. Homodimer.

It localises to the cell outer membrane. The catalysed reaction is a lipid A + a 1,2-diacyl-sn-glycero-3-phosphocholine = a hepta-acyl lipid A + a 2-acyl-sn-glycero-3-phosphocholine. It catalyses the reaction a lipid IVA + a 1,2-diacyl-sn-glycero-3-phosphocholine = a lipid IVB + a 2-acyl-sn-glycero-3-phosphocholine. The enzyme catalyses a lipid IIA + a 1,2-diacyl-sn-glycero-3-phosphocholine = a lipid IIB + a 2-acyl-sn-glycero-3-phosphocholine. Functionally, transfers a fatty acid residue from the sn-1 position of a phospholipid to the N-linked hydroxyfatty acid chain on the proximal unit of lipid A or its precursors. This Dickeya dadantii (strain 3937) (Erwinia chrysanthemi (strain 3937)) protein is Lipid A acyltransferase PagP.